The following is an 882-amino-acid chain: Alanine--tRNA ligase (882 aa).

The Zn(2+) site is built by His571, His575, Cys673, and His677.

Belongs to the class-II aminoacyl-tRNA synthetase family. Zn(2+) is required as a cofactor.

Its subcellular location is the cytoplasm. The catalysed reaction is tRNA(Ala) + L-alanine + ATP = L-alanyl-tRNA(Ala) + AMP + diphosphate. Its function is as follows. Catalyzes the attachment of alanine to tRNA(Ala) in a two-step reaction: alanine is first activated by ATP to form Ala-AMP and then transferred to the acceptor end of tRNA(Ala). Also edits incorrectly charged Ser-tRNA(Ala) and Gly-tRNA(Ala) via its editing domain. In Desulfotalea psychrophila (strain LSv54 / DSM 12343), this protein is Alanine--tRNA ligase.